The sequence spans 697 residues: Elongation factor G (697 aa).

Residues 8–283 enclose the tr-type G domain; sequence ERMRNIGIAA…AVVDYLPSPL (276 aa). Residues 17–24, 81–85, and 135–138 each bind GTP; these read AHIDAGKT, DTPGH, and NKMD.

This sequence belongs to the TRAFAC class translation factor GTPase superfamily. Classic translation factor GTPase family. EF-G/EF-2 subfamily.

It is found in the cytoplasm. Its function is as follows. Catalyzes the GTP-dependent ribosomal translocation step during translation elongation. During this step, the ribosome changes from the pre-translocational (PRE) to the post-translocational (POST) state as the newly formed A-site-bound peptidyl-tRNA and P-site-bound deacylated tRNA move to the P and E sites, respectively. Catalyzes the coordinated movement of the two tRNA molecules, the mRNA and conformational changes in the ribosome. The protein is Elongation factor G of Solibacter usitatus (strain Ellin6076).